A 425-amino-acid polypeptide reads, in one-letter code: Histone-binding protein RBBP7 (425 aa).

7 WD repeats span residues 47–122, 128–173, 181–217, 228–269, 275–312, 318–369, and 376–403; these read QWLP…KINH, RARY…LRLR, GLSWNSNLSGHLLSASDDHTVCLWDISAGPKEGKVVD, VVED…HSVD, VNCLSFNPYSEFILATGSADKTVALWDLRNLKLKLHSF, EIFQ…LFIH, and ISDFSWNPNEPWVICSVSEDNIMQIWQM.

It belongs to the WD repeat RBAP46/RBAP48/MSI1 family. In terms of assembly, binds directly to helix 1 of the histone fold of histone H4, a region that is not accessible when H4 is in chromatin.

It is found in the nucleus. Functionally, core histone-binding subunit that may target chromatin remodeling factors, histone acetyltransferases and histone deacetylases to their histone substrates in a manner that is regulated by nucleosomal DNA. Component of several complexes which regulate chromatin metabolism. The protein is Histone-binding protein RBBP7 (rbbp7) of Xenopus tropicalis (Western clawed frog).